The following is a 132-amino-acid chain: Small ribosomal subunit protein uS17c (132 aa).

Residues 1–11 (MLLLSSPFVSV) show a composition bias toward low complexity. Disordered regions lie at residues 1–23 (MLLL…SHGA) and 104–132 (PLPP…SSRE). Residues 1–31 (MLLLSSPFVSVSPPPPPLSSHGARPALRIEA) constitute a chloroplast transit peptide. The segment covering 122–132 (SDDDQEPSSRE) has biased composition (acidic residues).

The protein belongs to the universal ribosomal protein uS17 family. Part of the 30S ribosomal subunit.

Its subcellular location is the plastid. The protein localises to the chloroplast. One of the primary rRNA binding proteins, it binds specifically to the 5'-end of 16S ribosomal RNA. Functionally, in the hcf60 mutation the Activator tag is inserted 17 base pars upstream of the initiation codon. This mutation is seedling lethal, due to plastid ribosome insufficiency. However under non-light stressed conditions photosynthesis and oxygen evolution can occur. The protein is Small ribosomal subunit protein uS17c (RPS17) of Zea mays (Maize).